The following is a 294-amino-acid chain: NAD kinase (294 aa).

The Proton acceptor role is filled by D74. NAD(+) is bound by residues 74 to 75 (DG), 148 to 149 (NE), H159, R176, D178, 189 to 194 (TAYSLS), and Q249.

Belongs to the NAD kinase family. Requires a divalent metal cation as cofactor.

It is found in the cytoplasm. It catalyses the reaction NAD(+) + ATP = ADP + NADP(+) + H(+). Its function is as follows. Involved in the regulation of the intracellular balance of NAD and NADP, and is a key enzyme in the biosynthesis of NADP. Catalyzes specifically the phosphorylation on 2'-hydroxyl of the adenosine moiety of NAD to yield NADP. This is NAD kinase from Vibrio parahaemolyticus serotype O3:K6 (strain RIMD 2210633).